The sequence spans 397 residues: B3 domain-containing protein At4g34400 (397 aa).

Residues 14-107 (PRFFTVFVSH…IFEVSIFRGY (94 aa)) constitute a DNA-binding region (TF-B3). The interval 118-255 (ELEEEEEDSV…SSYAPDKEDT (138 aa)) is disordered. A compositionally biased stretch (basic and acidic residues) spans 137–160 (TGAKSEMKNTVPEGRDKGKSKVEV). Composition is skewed to acidic residues over residues 161–186 (VEDS…TDTD), 212–227 (SSDD…DSDY), and 235–246 (DIEENSISEEDS).

Its subcellular location is the nucleus. The polypeptide is B3 domain-containing protein At4g34400 (Arabidopsis thaliana (Mouse-ear cress)).